A 469-amino-acid polypeptide reads, in one-letter code: Transcription factor phomD' (469 aa).

The zn(2)-C6 fungal-type DNA-binding region spans 14–41 (CNACNESKVRCSQRKPTCARCERNGVEC). The disordered stretch occupies residues 49–118 (THKDAPPISM…QQKDEAAAAA (70 aa)). The span at 82–93 (KANSNSSSNWHM) shows a compositional bias: polar residues. Residues 104–118 (QQQQQQQKDEAAAAA) show a composition bias toward low complexity.

The protein resides in the nucleus. Functionally, transcription factor; part of the gene cluster that mediates the biosynthesis of the phomopsins, a group of hexapeptide mycotoxins which infects lupins and causes lupinosis disease in livestock. May play a role in the regulation of the production of phomopsins. In Diaporthe leptostromiformis (Lupinosis disease fungus), this protein is Transcription factor phomD'.